The sequence spans 162 residues: Caveolin-2 (162 aa).

The Cytoplasmic segment spans residues 1–86 (MGLETEKADV…FEISKYVMYK (86 aa)). Tyr19 is modified (phosphotyrosine; by SRC). Residues Ser20 and Ser23 each carry the phosphoserine modification. Tyr27 carries the phosphotyrosine; by SRC modification. Ser36 is subject to Phosphoserine. The helical intramembrane region spans 87 to 107 (FLTVFLAIPLAFLAGILFATL). The Cytoplasmic portion of the chain corresponds to 108–162 (SCLHIWIIMPFVKTCLMVLPSVQTIWKSVTDAIIAPLCTSIGRSFSSVSLQLSQD).

It belongs to the caveolin family. As to quaternary structure, monomer or homodimer. Interacts with CAV1; the interaction forms a stable heterooligomeric complex that is required for targeting to lipid rafts and for caveolae formation. Tyrosine phosphorylated forms do not form heterooligomers with the Tyr-19-phosphorylated form existing as a monomer or dimer, and the Tyr-27-form as a monomer only. Interacts (tyrosine phosphorylated form) with the SH2 domain-containing proteins, RASA1, NCK1 and SRC. Interacts (tyrosine phosphorylated form) with INSR, the interaction (Tyr-27-phosphorylated form) is increased on insulin stimulation. Interacts (Tyr-19 phosphorylated form) with MAPK1 (phosphorylated form); the interaction, promoted by insulin, leads to nuclear location and MAPK1 activation. Interacts with STAT3; the interaction is increased on insulin-induced tyrosine phosphorylation leading to STAT activation. In terms of processing, phosphorylated on serine and tyrosine residues. CAV1 promotes phosphorylation on Ser-23 which then targets the complex to the plasma membrane, lipid rafts and caveolae. Phosphorylation on Ser-36 appears to modulate mitosis in endothelial cells. Phosphorylation on both Tyr-19 and Tyr-27 is required for insulin-induced 'Ser-727' phosphorylation of STAT3 and its activation. Phosphorylation on Tyr-19 is required for insulin-induced phosphorylation of MAPK1 and DNA binding of STAT3. Tyrosine phosphorylation is induced by both EGF and insulin (By. similarity).

It is found in the nucleus. Its subcellular location is the cytoplasm. It localises to the golgi apparatus membrane. The protein localises to the cell membrane. The protein resides in the membrane. It is found in the caveola. May act as a scaffolding protein within caveolar membranes. Interacts directly with G-protein alpha subunits and can functionally regulate their activity. Acts as an accessory protein in conjunction with CAV1 in targeting to lipid rafts and driving caveolae formation. The Ser-36 phosphorylated form has a role in modulating mitosis in endothelial cells. Positive regulator of cellular mitogenesis of the MAPK signaling pathway. Required for the insulin-stimulated nuclear translocation and activation of MAPK1 and STAT3, and the subsequent regulation of cell cycle progression. This Plecturocebus moloch (Dusky titi monkey) protein is Caveolin-2 (CAV2).